Reading from the N-terminus, the 87-residue chain is MVNMKASMFLTFAGLVLLFVVCYASESEEKEFPKEMLSSIFAVDNDFKQGERDCAGYMRECKEKLCCSGYVCSSRWKWCVLPAPWRR.

The N-terminal stretch at 1–24 (MVNMKASMFLTFAGLVLLFVVCYA) is a signal peptide. Positions 25-52 (SESEEKEFPKEMLSSIFAVDNDFKQGER) are excised as a propeptide. Cystine bridges form between C54-C67, C61-C72, and C66-C79.

This sequence belongs to the neurotoxin 10 (Hwtx-1) family. 51 (Hntx-8) subfamily. Hntx-8 sub-subfamily. As to expression, expressed by the venom gland.

It is found in the secreted. Its function is as follows. Ion channel inhibitor. In Cyriopagopus hainanus (Chinese bird spider), this protein is U3-theraphotoxin-Hhn1a 16.